The sequence spans 198 residues: FMN-dependent NADH:quinone oxidoreductase (198 aa).

FMN contacts are provided by residues Ser-10, Ser-16–Ser-18, Met-94–Phe-97, and Thr-138–Gly-141.

The protein belongs to the azoreductase type 1 family. As to quaternary structure, homodimer. It depends on FMN as a cofactor.

It carries out the reaction 2 a quinone + NADH + H(+) = 2 a 1,4-benzosemiquinone + NAD(+). The catalysed reaction is N,N-dimethyl-1,4-phenylenediamine + anthranilate + 2 NAD(+) = 2-(4-dimethylaminophenyl)diazenylbenzoate + 2 NADH + 2 H(+). Quinone reductase that provides resistance to thiol-specific stress caused by electrophilic quinones. In terms of biological role, also exhibits azoreductase activity. Catalyzes the reductive cleavage of the azo bond in aromatic azo compounds to the corresponding amines. In Shewanella sp. (strain MR-4), this protein is FMN-dependent NADH:quinone oxidoreductase.